The following is a 911-amino-acid chain: Protein translocase subunit SecA (911 aa).

ATP-binding positions include Q87, 105-109 (GEGKT), and D513. A disordered region spans residues 853 to 911 (IQLQHEQVSGLEPEAGEAPSAGEPRSEQPYVRAGRKVGRNDPCPCGSGKKFKACHGKLG). Over residues 862–875 (GLEPEAGEAPSAGE) the composition is skewed to low complexity. Zn(2+)-binding residues include C895, C897, C906, and H907. Residues 901-911 (KKFKACHGKLG) are compositionally biased toward basic residues.

It belongs to the SecA family. In terms of assembly, monomer and homodimer. Part of the essential Sec protein translocation apparatus which comprises SecA, SecYEG and auxiliary proteins SecDF-YajC and YidC. Zn(2+) serves as cofactor.

It is found in the cell inner membrane. It localises to the cytoplasm. The enzyme catalyses ATP + H2O + cellular proteinSide 1 = ADP + phosphate + cellular proteinSide 2.. In terms of biological role, part of the Sec protein translocase complex. Interacts with the SecYEG preprotein conducting channel. Has a central role in coupling the hydrolysis of ATP to the transfer of proteins into and across the cell membrane, serving both as a receptor for the preprotein-SecB complex and as an ATP-driven molecular motor driving the stepwise translocation of polypeptide chains across the membrane. The protein is Protein translocase subunit SecA of Teredinibacter turnerae (strain ATCC 39867 / T7901).